The following is a 307-amino-acid chain: MTRHFLRDDDLTPEEQAEVLALAAALKKDPFSRRPLEGPRGVAVIFEKNSTRTRFSFEMGIAQLGGHAVVVDGRSTQLGREETLEDTGAVLSRYVDAIVWRTFAQERLTAMASGASVPIVNALSDEFHPCQVLADLQTLIERKGSLKGLRLAYFGDGANNMAHSLMLGGVTAGVDVTIAAPRGFEPHPMFIAAAETRAHQTGATVAVIDDPLRAADGADVLVTDTWTSMGQENDGLDRVRPFRPFQVNADLLGRADSEAVVLHCLPAHRGHEITDEVIDGPRSAVWDEAENRLHAQKALLVWLLERS.

Carbamoyl phosphate is bound by residues 50–53 (STRT), Q77, R101, and 128–131 (HPCQ). Residues N160, D224, and 228 to 229 (SM) contribute to the L-ornithine site. Residues 264-265 (CL) and R292 each bind carbamoyl phosphate.

It belongs to the aspartate/ornithine carbamoyltransferase superfamily. OTCase family.

The protein localises to the cytoplasm. It carries out the reaction carbamoyl phosphate + L-ornithine = L-citrulline + phosphate + H(+). It functions in the pathway amino-acid biosynthesis; L-arginine biosynthesis; L-arginine from L-ornithine and carbamoyl phosphate: step 1/3. Its function is as follows. Reversibly catalyzes the transfer of the carbamoyl group from carbamoyl phosphate (CP) to the N(epsilon) atom of ornithine (ORN) to produce L-citrulline. In Mycolicibacterium gilvum (strain PYR-GCK) (Mycobacterium gilvum (strain PYR-GCK)), this protein is Ornithine carbamoyltransferase.